We begin with the raw amino-acid sequence, 129 residues long: Small ribosomal subunit protein uS11 (129 aa).

It belongs to the universal ribosomal protein uS11 family. Part of the 30S ribosomal subunit. Interacts with proteins S7 and S18. Binds to IF-3.

Functionally, located on the platform of the 30S subunit, it bridges several disparate RNA helices of the 16S rRNA. Forms part of the Shine-Dalgarno cleft in the 70S ribosome. The sequence is that of Small ribosomal subunit protein uS11 from Mycoplasma mycoides subsp. mycoides SC (strain CCUG 32753 / NCTC 10114 / PG1).